Reading from the N-terminus, the 378-residue chain is Queuine tRNA-ribosyltransferase (378 aa).

Asp-91 serves as the catalytic Proton acceptor. Residues 91–95 (DSGGF), Asp-145, Gln-197, and Gly-224 each bind substrate. Residue Asp-274 is the Nucleophile of the active site. The segment at 279–283 (TRLAR) is RNA binding; important for wobble base 34 recognition. The Zn(2+) site is built by Cys-312, Cys-314, Cys-317, and His-343.

It belongs to the queuine tRNA-ribosyltransferase family. As to quaternary structure, homodimer. Within each dimer, one monomer is responsible for RNA recognition and catalysis, while the other monomer binds to the replacement base PreQ1. It depends on Zn(2+) as a cofactor.

The catalysed reaction is 7-aminomethyl-7-carbaguanine + guanosine(34) in tRNA = 7-aminomethyl-7-carbaguanosine(34) in tRNA + guanine. It functions in the pathway tRNA modification; tRNA-queuosine biosynthesis. In terms of biological role, catalyzes the base-exchange of a guanine (G) residue with the queuine precursor 7-aminomethyl-7-deazaguanine (PreQ1) at position 34 (anticodon wobble position) in tRNAs with GU(N) anticodons (tRNA-Asp, -Asn, -His and -Tyr). Catalysis occurs through a double-displacement mechanism. The nucleophile active site attacks the C1' of nucleotide 34 to detach the guanine base from the RNA, forming a covalent enzyme-RNA intermediate. The proton acceptor active site deprotonates the incoming PreQ1, allowing a nucleophilic attack on the C1' of the ribose to form the product. After dissociation, two additional enzymatic reactions on the tRNA convert PreQ1 to queuine (Q), resulting in the hypermodified nucleoside queuosine (7-(((4,5-cis-dihydroxy-2-cyclopenten-1-yl)amino)methyl)-7-deazaguanosine). In Methylacidiphilum infernorum (isolate V4) (Methylokorus infernorum (strain V4)), this protein is Queuine tRNA-ribosyltransferase.